The sequence spans 983 residues: Anion exchange protein 4 (983 aa).

Residues 1-48 form a disordered region; sequence MEMKLPGQEGFEASSAPRNIPSGELDSNPDPGTGPSPDGPSDTESKEL. N-linked (GlcNAc...) asparagine glycosylation is present at Asn-183. 2 disordered regions span residues 186–205 and 332–357; these read TGTR…DNEE and RIPP…RGPA. The next 4 membrane-spanning stretches (helical) occupy residues 415 to 435, 443 to 463, 500 to 520, and 530 to 550; these read AVLY…GLLG, GVLE…LMAG, VGIW…SVLV, and GFCA…MLNL. Residues 415-983 form a membrane (anion exchange) region; the sequence is AVLYIYLATV…KAPEINISVN (569 aa). Asn-576 and Asn-600 each carry an N-linked (GlcNAc...) asparagine glycan. 7 helical membrane passes run 624–644, 665–685, 712–732, 758–778, 815–835, 837–857, and 899–919; these read VPDI…FAMA, FSSV…GLAT, PWWW…LIFM, LFCV…WYVS, GLVV…LKFI, MPVL…SIQF, and LWII…LGLV. Basic and acidic residues predominate over residues 946–957; sequence RSIPEKGLEPEH. The segment at 946-983 is disordered; the sequence is RSIPEKGLEPEHSFSGSDSEDSELMYQPKAPEINISVN. Asn-979 carries an N-linked (GlcNAc...) asparagine glycan.

The protein belongs to the anion exchanger (TC 2.A.31) family. As to expression, kidney specific.

The protein localises to the basolateral cell membrane. It catalyses the reaction 2 hydrogencarbonate(out) + chloride(in) + Na(+)(out) = 2 hydrogencarbonate(in) + chloride(out) + Na(+)(in). The enzyme catalyses K(+)(in) + 2 hydrogencarbonate(in) + chloride(out) = K(+)(out) + 2 hydrogencarbonate(out) + chloride(in). It carries out the reaction Li(+)(in) + 2 hydrogencarbonate(in) + chloride(out) = Li(+)(out) + 2 hydrogencarbonate(out) + chloride(in). The catalysed reaction is Rb(+)(in) + 2 hydrogencarbonate(in) + chloride(out) = Rb(+)(out) + 2 hydrogencarbonate(out) + chloride(in). It catalyses the reaction Cs(+)(in) + 2 hydrogencarbonate(in) + chloride(out) = Cs(+)(out) + 2 hydrogencarbonate(out) + chloride(in). Electroneutral Cl(-)/HCO3(-) antiporter that favors chloride ion entry and efflux of hydrogencarbonate and sodium ion across the basolateral membrane and may participate in salivary secretion. Also mediates Cl(-)/HCO3(-) exchange activity in the presence of K(+) as well as Cs(+), Li(+), and Rb(+). Does not contribute to Cl(-)/HCO3(-) exchanger in the apical membrane of the upper villous epithelium. This is Anion exchange protein 4 from Homo sapiens (Human).